The primary structure comprises 875 residues: Probable inorganic carbon transporter subunit DabA (875 aa).

Positions 399, 401, 581, and 596 each coordinate Zn(2+).

This sequence belongs to the inorganic carbon transporter (TC 9.A.2) DabA family. Forms a complex with DabB. Requires Zn(2+) as cofactor.

It localises to the cell membrane. Part of an energy-coupled inorganic carbon pump. The sequence is that of Probable inorganic carbon transporter subunit DabA from Bacillus thuringiensis (strain Al Hakam).